Reading from the N-terminus, the 364-residue chain is WAT1-related protein At3g30340 (364 aa).

The next 10 membrane-spanning stretches (helical) occupy residues Trp9–Phe29, Val41–Leu61, Ser76–Leu96, Thr102–Phe122, Leu138–Ala158, Trp183–Val203, Tyr215–Ile235, Val251–Trp271, Gly277–Phe297, and Ile304–Trp324. EamA domains follow at residues Asn26–Thr152 and Ile195–Leu323.

This sequence belongs to the drug/metabolite transporter (DMT) superfamily. Plant drug/metabolite exporter (P-DME) (TC 2.A.7.4) family.

It localises to the membrane. The sequence is that of WAT1-related protein At3g30340 from Arabidopsis thaliana (Mouse-ear cress).